Reading from the N-terminus, the 636-residue chain is Eukaryotic peptide chain release factor GTP-binding subunit ERF3A (636 aa).

Gly residues-rich tracts occupy residues 1-16 and 103-116; these read MDPSSGGGGGGGGGGS and AAGGDHGAGSGAGG. Disordered regions lie at residues 1 to 54 and 90 to 206; these read MDPS…AAVA and LRGP…PPGA. A compositionally biased stretch (polar residues) spans 121 to 138; it reads VESSQDQSCEGSNSTVSM. Residues 183-193 are compositionally biased toward acidic residues; sequence STQEMMEEEEE. The region spanning 209–435 is the tr-type G domain; the sequence is KEHVNVVFIG…DNLPNFNRSV (227 aa). The interval 218 to 225 is G1; sequence GHVDAGKS. 221-226 lines the GTP pocket; it reads DAGKST. Residues 274–278 form a G2 region; sequence GKTVE. The interval 295-298 is G3; sequence DAPG. GTP-binding positions include 357–360 and 399–401; these read NKMD and SGL. Residues 357–360 form a G4 region; sequence NKMD. The interval 399–401 is G5; sequence SGL.

The protein belongs to the TRAFAC class translation factor GTPase superfamily. Classic translation factor GTPase family. ERF3 subfamily. As to quaternary structure, component of the eRF1-eRF3-GTP ternary complex, composed of ETF1/ERF1 and ERF3 (GSPT1/ERF3A or GSPT2/ERF3B) and GTP. Component of the transient SURF (SMG1-UPF1-eRF1-eRF3) complex. The ETF1-GSPT1 complex interacts with JMJD4. Interacts with PABPC1. Interacts with SHFL.

It carries out the reaction GTP + H2O = GDP + phosphate + H(+). In terms of biological role, GTPase component of the eRF1-eRF3-GTP ternary complex, a ternary complex that mediates translation termination in response to the termination codons UAA, UAG and UGA. GSPT1/ERF3A mediates ETF1/ERF1 delivery to stop codons: The eRF1-eRF3-GTP complex binds to a stop codon in the ribosomal A-site. GTP hydrolysis by GSPT1/ERF3A induces a conformational change that leads to its dissociation, permitting ETF1/ERF1 to accommodate fully in the A-site. Component of the transient SURF complex which recruits UPF1 to stalled ribosomes in the context of nonsense-mediated decay (NMD) of mRNAs containing premature stop codons. Required for SHFL-mediated translation termination which inhibits programmed ribosomal frameshifting (-1PRF) of mRNA from viruses and cellular genes. In Mus musculus (Mouse), this protein is Eukaryotic peptide chain release factor GTP-binding subunit ERF3A (Gspt1).